The chain runs to 250 residues: UDP-2,3-diacylglucosamine hydrolase (250 aa).

5 residues coordinate Mn(2+): aspartate 7, histidine 9, aspartate 40, asparagine 78, and histidine 113. 78-79 (NR) contributes to the substrate binding site. Aspartate 121, serine 159, threonine 163, lysine 166, and histidine 194 together coordinate substrate. The Mn(2+) site is built by histidine 194 and histidine 196.

The protein belongs to the LpxH family. It depends on Mn(2+) as a cofactor.

It is found in the cell inner membrane. The catalysed reaction is UDP-2-N,3-O-bis[(3R)-3-hydroxytetradecanoyl]-alpha-D-glucosamine + H2O = 2-N,3-O-bis[(3R)-3-hydroxytetradecanoyl]-alpha-D-glucosaminyl 1-phosphate + UMP + 2 H(+). It participates in glycolipid biosynthesis; lipid IV(A) biosynthesis; lipid IV(A) from (3R)-3-hydroxytetradecanoyl-[acyl-carrier-protein] and UDP-N-acetyl-alpha-D-glucosamine: step 4/6. Hydrolyzes the pyrophosphate bond of UDP-2,3-diacylglucosamine to yield 2,3-diacylglucosamine 1-phosphate (lipid X) and UMP by catalyzing the attack of water at the alpha-P atom. Involved in the biosynthesis of lipid A, a phosphorylated glycolipid that anchors the lipopolysaccharide to the outer membrane of the cell. The protein is UDP-2,3-diacylglucosamine hydrolase of Pseudomonas fluorescens (strain ATCC BAA-477 / NRRL B-23932 / Pf-5).